We begin with the raw amino-acid sequence, 539 residues long: Cell division control protein 6 homolog (539 aa).

A disordered region spans residues 1-40; sequence MPAIAGPSSSPQKHVVGSRSESIGGVRSAEVNTSRKRKLI. The short motif at 35–38 is the Nuclear localization signal element; it reads RKRK.

Belongs to the CDC6/cdc18 family. Highly expressed in roots, flower buds and etiolated seedlings. Expressed in leaves and stems. Highly expressed in proliferating cells such as root meristems, leaf primordia and young growing leaves, as well as cells undergoing endoreduplication cycles.

It is found in the nucleus. May be involved in the initiation of DNA replication. May play a role in endoreduplication. Could act as one of the factors that contributes to maintain endoreduplication competence. The protein is Cell division control protein 6 homolog of Arabidopsis thaliana (Mouse-ear cress).